Here is a 141-residue protein sequence, read N- to C-terminus: uncharacterized protein (141 aa).

The tract at residues 1–61 is disordered; it reads IRLLHSLTPP…PPPPPPPRRA (61 aa). The segment covering 8–58 has biased composition (pro residues); sequence TPPPPPPPPPPPPPPPPPPPPPPPPPPPPPPPPPPPPPPPPPPPPPPPPPP. Positions 98 to 116 form a DNA-binding region, H-T-H motif; it reads KRLLVAYPVRHFLSAACQF.

This is an uncharacterized protein from Owenia fusiformis (Polychaete worm).